The following is a 359-amino-acid chain: Phospho-N-acetylmuramoyl-pentapeptide-transferase (359 aa).

Helical transmembrane passes span 3–23, 55–75, 84–104, 117–137, 156–176, 187–207, 231–251, 255–275, 280–300, and 334–354; these read QIIIAAGIAILVSIMLTPVLI, VAILAGMWAGYFGSHLVGIAF, GLLVLALATMLGGVGFIDDFI, TSKTVGQILSALVFGVLVLQF, IATVAMPAAIFVLFCVILVMS, LDGLAGGCMAMVTGAYVIVTF, LAVIAAATAGACIGFLWWNAA, IFMGDTGSLALGGVIAGLSVT, LLAVVLGALFVAEIVSVVLQI, and FWLLTAIACGLGLALFYGEWL.

Belongs to the glycosyltransferase 4 family. MraY subfamily. The cofactor is Mg(2+).

The protein localises to the cell membrane. It carries out the reaction UDP-N-acetyl-alpha-D-muramoyl-L-alanyl-gamma-D-glutamyl-meso-2,6-diaminopimeloyl-D-alanyl-D-alanine + di-trans,octa-cis-undecaprenyl phosphate = di-trans,octa-cis-undecaprenyl diphospho-N-acetyl-alpha-D-muramoyl-L-alanyl-D-glutamyl-meso-2,6-diaminopimeloyl-D-alanyl-D-alanine + UMP. It participates in cell wall biogenesis; peptidoglycan biosynthesis. Its function is as follows. Catalyzes the initial step of the lipid cycle reactions in the biosynthesis of the cell wall peptidoglycan: transfers peptidoglycan precursor phospho-MurNAc-pentapeptide from UDP-MurNAc-pentapeptide onto the lipid carrier undecaprenyl phosphate, yielding undecaprenyl-pyrophosphoryl-MurNAc-pentapeptide, known as lipid I. The protein is Phospho-N-acetylmuramoyl-pentapeptide-transferase of Mycobacteroides abscessus (strain ATCC 19977 / DSM 44196 / CCUG 20993 / CIP 104536 / JCM 13569 / NCTC 13031 / TMC 1543 / L948) (Mycobacterium abscessus).